The chain runs to 459 residues: Protoheme IX farnesyltransferase (459 aa).

The tract at residues 1 to 184 (MSRNTATQFV…AYVQLMKPRL (184 aa)) is unknown. 12 helical membrane-spanning segments follow: residues 9-29 (FVAV…LGAT), 66-86 (AAAL…RTGA), 93-113 (AVTL…YTAM), 123-143 (VHLT…AWTL), 184-204 (LMWL…SQLG), 211-231 (AATV…SGTF), 262-282 (LAFG…VNLL), 284-304 (AVLG…VLKP), 325-345 (WVAV…VIFL), 382-402 (HIVY…ELTG), 403-423 (LGPL…YFAI), and 438-458 (FHAS…DTMV). The protoheme IX prenyltransferase stretch occupies residues 185-459 (MWLLCLVAGA…VAVVLDTMVV (275 aa)).

The protein in the C-terminal section; belongs to the UbiA prenyltransferase family. Protoheme IX farnesyltransferase subfamily.

The protein localises to the cell membrane. The catalysed reaction is heme b + (2E,6E)-farnesyl diphosphate + H2O = Fe(II)-heme o + diphosphate. It participates in porphyrin-containing compound metabolism; heme O biosynthesis; heme O from protoheme: step 1/1. In terms of biological role, converts heme B (protoheme IX) to heme O by substitution of the vinyl group on carbon 2 of heme B porphyrin ring with a hydroxyethyl farnesyl side group. The chain is Protoheme IX farnesyltransferase (ctaB) from Halobacterium salinarum (strain ATCC 29341 / DSM 671 / R1).